The following is a 149-amino-acid chain: Protein SprT-like (149 aa).

The region spanning 5-143 is the SprT-like domain; that stretch reads DYVKQVSLED…CGLCRGKLLL (139 aa). Position 64 (histidine 64) interacts with Zn(2+). Residue glutamate 65 is part of the active site. Zn(2+) is bound at residue histidine 68.

It belongs to the SprT family. The cofactor is Zn(2+).

The protein resides in the cytoplasm. The polypeptide is Protein SprT-like (Streptococcus pneumoniae (strain Hungary19A-6)).